A 425-amino-acid chain; its full sequence is Serine--tRNA ligase (425 aa).

Disordered stretches follow at residues 43–68 and 108–131; these read QRSS…GSDP and LPNL…RHCW. The span at 117–131 shows a compositional bias: basic and acidic residues; sequence PEGRDENDNQERHCW. 233–235 is an L-serine binding site; sequence TAE. An ATP-binding site is contributed by 264-266; it reads RRE. Residue Glu287 participates in L-serine binding. Residue 351 to 354 coordinates ATP; sequence EISS. Ser385 is an L-serine binding site.

This sequence belongs to the class-II aminoacyl-tRNA synthetase family. Type-1 seryl-tRNA synthetase subfamily. In terms of assembly, homodimer. The tRNA molecule binds across the dimer.

The protein resides in the cytoplasm. It catalyses the reaction tRNA(Ser) + L-serine + ATP = L-seryl-tRNA(Ser) + AMP + diphosphate + H(+). The enzyme catalyses tRNA(Sec) + L-serine + ATP = L-seryl-tRNA(Sec) + AMP + diphosphate + H(+). The protein operates within aminoacyl-tRNA biosynthesis; selenocysteinyl-tRNA(Sec) biosynthesis; L-seryl-tRNA(Sec) from L-serine and tRNA(Sec): step 1/1. Functionally, catalyzes the attachment of serine to tRNA(Ser). Is also able to aminoacylate tRNA(Sec) with serine, to form the misacylated tRNA L-seryl-tRNA(Sec), which will be further converted into selenocysteinyl-tRNA(Sec). The protein is Serine--tRNA ligase of Prochlorococcus marinus (strain MIT 9303).